The following is a 349-amino-acid chain: Nuclear distribution protein nudE homolog 1 (349 aa).

Residues 23–189 (AMKYKTCSEE…ELAVQQKQEK (167 aa)) adopt a coiled-coil conformation. The segment at 182 to 201 (AVQQKQEKPKSNMGSPETER) is disordered.

Belongs to the nudE family. As to quaternary structure, self-associates. Interacts with pafah1b1. In terms of processing, phosphorylated in mitosis.

It localises to the cytoplasm. The protein localises to the cytoskeleton. It is found in the microtubule organizing center. Its subcellular location is the centrosome. The protein resides in the spindle. It localises to the chromosome. The protein localises to the centromere. It is found in the kinetochore. Its subcellular location is the cleavage furrow. The protein resides in the cytoplasmic vesicle membrane. In terms of biological role, required for centrosome duplication and formation and function of the mitotic spindle. The protein is Nuclear distribution protein nudE homolog 1 (nde1) of Xenopus tropicalis (Western clawed frog).